The primary structure comprises 954 residues: Glycine dehydrogenase (decarboxylating) (954 aa).

The residue at position 706 (lysine 706) is an N6-(pyridoxal phosphate)lysine.

This sequence belongs to the GcvP family. In terms of assembly, the glycine cleavage system is composed of four proteins: P, T, L and H. The cofactor is pyridoxal 5'-phosphate.

It carries out the reaction N(6)-[(R)-lipoyl]-L-lysyl-[glycine-cleavage complex H protein] + glycine + H(+) = N(6)-[(R)-S(8)-aminomethyldihydrolipoyl]-L-lysyl-[glycine-cleavage complex H protein] + CO2. Functionally, the glycine cleavage system catalyzes the degradation of glycine. The P protein binds the alpha-amino group of glycine through its pyridoxal phosphate cofactor; CO(2) is released and the remaining methylamine moiety is then transferred to the lipoamide cofactor of the H protein. This chain is Glycine dehydrogenase (decarboxylating), found in Thermosynechococcus vestitus (strain NIES-2133 / IAM M-273 / BP-1).